A 397-amino-acid polypeptide reads, in one-letter code: Xylose isomerase (397 aa).

Residues histidine 54 and aspartate 57 contribute to the active site. Positions 181, 217, 220, 245, 255, 257, and 293 each coordinate Mg(2+).

It belongs to the xylose isomerase family. In terms of assembly, homotetramer. The cofactor is Mg(2+).

It localises to the cytoplasm. It catalyses the reaction alpha-D-xylose = alpha-D-xylulofuranose. In Clavibacter sepedonicus (Clavibacter michiganensis subsp. sepedonicus), this protein is Xylose isomerase.